The sequence spans 74 residues: CLAVATA3/ESR (CLE)-related protein 19 (74 aa).

Positions 1 to 24 (MKIKGLMILASSLLILAFIHQSES) are cleaved as a signal peptide. Residues asparagine 34 and asparagine 54 are each glycosylated (N-linked (GlcNAc...) asparagine). Residues proline 65 and proline 68 each carry the hydroxyproline modification. The O-linked (Ara...) hydroxyproline glycan is linked to proline 68.

Belongs to the CLV3/ESR signal peptide family. Post-translationally, the O-glycosylation (arabinosylation) of the hydroxyproline Pro-68 enhances binding affinity of the CLE19p peptide for its receptor. Mostly expressed in heart-shape embryos, pollen and young flower buds, and, to a lower extent, in inflorescence, leaves and roots.

Its subcellular location is the secreted. It is found in the extracellular space. Its function is as follows. Extracellular signal peptide that regulates cell fate. Represses root apical meristem maintenance. This is CLAVATA3/ESR (CLE)-related protein 19 from Arabidopsis thaliana (Mouse-ear cress).